We begin with the raw amino-acid sequence, 59 residues long: Small ribosomal subunit protein bS21 (59 aa).

Residues 36 to 59 are disordered; it reads EHYEKPSVKRKKKAEAAKRNKSKF. Residues 43–59 show a composition bias toward basic residues; sequence VKRKKKAEAAKRNKSKF.

The protein belongs to the bacterial ribosomal protein bS21 family.

The polypeptide is Small ribosomal subunit protein bS21 (Alkaliphilus oremlandii (strain OhILAs) (Clostridium oremlandii (strain OhILAs))).